Reading from the N-terminus, the 273-residue chain is Dermonecrotic toxin LdSicTox-alphaIB1av (273 aa).

His5 is a catalytic residue. Mg(2+) is bound by residues Glu25 and Asp27. His41 serves as the catalytic Nucleophile. Disulfide bonds link Cys45-Cys51 and Cys47-Cys190. Asp85 contacts Mg(2+). The N-linked (GlcNAc...) asparagine glycan is linked to Asn250.

Belongs to the arthropod phospholipase D family. Class II subfamily. Requires Mg(2+) as cofactor. In terms of tissue distribution, expressed by the venom gland.

The protein localises to the secreted. The catalysed reaction is an N-(acyl)-sphingosylphosphocholine = an N-(acyl)-sphingosyl-1,3-cyclic phosphate + choline. The enzyme catalyses an N-(acyl)-sphingosylphosphoethanolamine = an N-(acyl)-sphingosyl-1,3-cyclic phosphate + ethanolamine. It carries out the reaction a 1-acyl-sn-glycero-3-phosphocholine = a 1-acyl-sn-glycero-2,3-cyclic phosphate + choline. It catalyses the reaction a 1-acyl-sn-glycero-3-phosphoethanolamine = a 1-acyl-sn-glycero-2,3-cyclic phosphate + ethanolamine. Dermonecrotic toxins cleave the phosphodiester linkage between the phosphate and headgroup of certain phospholipids (sphingolipid and lysolipid substrates), forming an alcohol (often choline) and a cyclic phosphate. This toxin acts on sphingomyelin (SM). It may also act on ceramide phosphoethanolamine (CPE), lysophosphatidylcholine (LPC) and lysophosphatidylethanolamine (LPE), but not on lysophosphatidylserine (LPS), and lysophosphatidylglycerol (LPG). It acts by transphosphatidylation, releasing exclusively cyclic phosphate products as second products. Induces dermonecrosis, hemolysis, increased vascular permeability, edema, inflammatory response, and platelet aggregation. The protein is Dermonecrotic toxin LdSicTox-alphaIB1av of Loxosceles deserta (Desert recluse spider).